A 76-amino-acid polypeptide reads, in one-letter code: Spore germination protein-like protein YdzR (76 aa).

It belongs to the GerPA/GerPF family.

The chain is Spore germination protein-like protein YdzR (ydzR) from Bacillus subtilis (strain 168).